Reading from the N-terminus, the 505-residue chain is 2-methylcitrate dehydratase (505 aa).

Belongs to the PrpD family. Monomer.

It catalyses the reaction (2S,3S)-2-methylcitrate = 2-methyl-cis-aconitate + H2O. It carries out the reaction citrate = D-threo-isocitrate. Its pathway is organic acid metabolism; propanoate degradation. The protein operates within carbohydrate metabolism; tricarboxylic acid cycle; isocitrate from oxaloacetate: step 1/2. Involved in the catabolism of short chain fatty acids (SCFA) via the tricarboxylic acid (TCA)(acetyl degradation route) and via the 2-methylcitrate cycle I (propionate degradation route). Catalyzes the dehydration of 2-methylcitrate (2-MC) to yield the cis isomer of 2-methyl-aconitate. Could also catalyze the dehydration of citrate and the hydration of cis-aconitate. The chain is 2-methylcitrate dehydratase from Mycobacterium tuberculosis (strain ATCC 35801 / TMC 107 / Erdman).